The sequence spans 368 residues: Ferrochelatase (368 aa).

Positions 209 and 290 each coordinate Fe cation. The segment at 347 to 368 (REEQEQQAHISREEARRLGADQ) is disordered.

It belongs to the ferrochelatase family.

The protein resides in the cytoplasm. It carries out the reaction heme b + 2 H(+) = protoporphyrin IX + Fe(2+). It functions in the pathway porphyrin-containing compound metabolism; protoheme biosynthesis; protoheme from protoporphyrin-IX: step 1/1. Catalyzes the ferrous insertion into protoporphyrin IX. The sequence is that of Ferrochelatase from Janthinobacterium sp. (strain Marseille) (Minibacterium massiliensis).